Consider the following 689-residue polypeptide: Glycine--tRNA ligase beta subunit (689 aa).

This sequence belongs to the class-II aminoacyl-tRNA synthetase family. Tetramer of two alpha and two beta subunits.

It is found in the cytoplasm. It catalyses the reaction tRNA(Gly) + glycine + ATP = glycyl-tRNA(Gly) + AMP + diphosphate. The polypeptide is Glycine--tRNA ligase beta subunit (Serratia proteamaculans (strain 568)).